The sequence spans 192 residues: MSNTIKMVVGLGNPGKEYEQTRHNAGFWFLDELAWKWKASFKEEKKFFGEVARAALPDGDVWLLKPATFMNRSGQAVAALAQFYKIKPEEILVVHDELDIPCGRIKFKLGGGNGGHNGLKDIQAKLGTADYYRLRLGIGHPGDRNLVVGYVLNKPSTEHRRQIDDAVAKSLQAIPDILAGKWEEATRFLHSK.

Tyrosine 18 contributes to the tRNA binding site. The active-site Proton acceptor is histidine 23. 3 residues coordinate tRNA: phenylalanine 69, asparagine 71, and asparagine 117.

The protein belongs to the PTH family. In terms of assembly, monomer.

Its subcellular location is the cytoplasm. The catalysed reaction is an N-acyl-L-alpha-aminoacyl-tRNA + H2O = an N-acyl-L-amino acid + a tRNA + H(+). Hydrolyzes ribosome-free peptidyl-tRNAs (with 1 or more amino acids incorporated), which drop off the ribosome during protein synthesis, or as a result of ribosome stalling. Its function is as follows. Catalyzes the release of premature peptidyl moieties from peptidyl-tRNA molecules trapped in stalled 50S ribosomal subunits, and thus maintains levels of free tRNAs and 50S ribosomes. The chain is Peptidyl-tRNA hydrolase from Neisseria meningitidis serogroup B (strain ATCC BAA-335 / MC58).